Consider the following 707-residue polypeptide: DNA-binding protein RFX2 (707 aa).

A Phosphoserine modification is found at serine 33. The segment at residues histidine 204–proline 279 is a DNA-binding region (RFX-type winged-helix). The disordered stretch occupies residues glutamine 297–glutamine 337. The span at leucine 315 to glutamine 337 shows a compositional bias: low complexity. Phosphoserine is present on serine 420.

This sequence belongs to the RFX family. Homodimer; probably only forms homodimers in testis. Heterodimer; heterodimerizes with RFX1 and RFX3.

Its subcellular location is the nucleus. It is found in the cytoplasm. Transcription factor that acts as a key regulator of spermatogenesis. Acts by regulating expression of genes required for the haploid phase during spermiogenesis, such as genes required for cilium assembly and function. Recognizes and binds the X-box, a regulatory motif with DNA sequence 5'-GTNRCC(0-3N)RGYAAC-3' present on promoters. Probably activates transcription of the testis-specific histone gene H1-6. The polypeptide is DNA-binding protein RFX2 (RFX2) (Bos taurus (Bovine)).